A 383-amino-acid chain; its full sequence is MDALEITQKLISYPTITPKECGIFEYIKSLFPHFKTLECGENGVKNLFLYRIFNPPKDHAEEKHAKENTKPLHFCFAGHIDVVPPGNHWQSDPFKPVIKEGFLYGRGAQDMKGGVGAFLSASLNFNPKTPFLLSILLTSDEEGPGIFGTRLMLEKLKEKDLLPHMAIVAEPTCEKVLGDSIKIGRRGSINGKLILKGVQGHVAYPQKCQNPIDTLASVLPLISGVNLDNGDEYFDPSKLVITNLHAGLGANNITPASVEIIFNARHSLKTTKESLKEYLEKVLKDLPYTLELESSSSPFITASHSKLTSVLKENILKTCHTTPLLNTKGGTSDARFFSAHGIEVVEFGVINDRIHAIDERVSLKELELLEKVFLGVLEGLSEA.

Residue His79 coordinates Zn(2+). Asp81 is an active-site residue. Asp110 contacts Zn(2+). The Proton acceptor role is filled by Glu141. Zn(2+) is bound by residues Glu142, Glu170, and His355.

The protein belongs to the peptidase M20A family. DapE subfamily. Homodimer. Requires Zn(2+) as cofactor. Co(2+) serves as cofactor.

The enzyme catalyses N-succinyl-(2S,6S)-2,6-diaminopimelate + H2O = (2S,6S)-2,6-diaminopimelate + succinate. It functions in the pathway amino-acid biosynthesis; L-lysine biosynthesis via DAP pathway; LL-2,6-diaminopimelate from (S)-tetrahydrodipicolinate (succinylase route): step 3/3. In terms of biological role, catalyzes the hydrolysis of N-succinyl-L,L-diaminopimelic acid (SDAP), forming succinate and LL-2,6-diaminopimelate (DAP), an intermediate involved in the bacterial biosynthesis of lysine and meso-diaminopimelic acid, an essential component of bacterial cell walls. This Helicobacter pylori (strain ATCC 700392 / 26695) (Campylobacter pylori) protein is Succinyl-diaminopimelate desuccinylase.